The chain runs to 1077 residues: Eukaryotic translation initiation factor 2-alpha kinase pek-1 (1077 aa).

The signal sequence occupies residues 1 to 23 (MSVYYIVLAGFLLFMALVPFNAG). Residues 24–453 (QQYIDDDIEV…ITLMQTIFSY (430 aa)) lie on the Lumenal side of the membrane. A glycan (N-linked (GlcNAc...) asparagine) is linked at Asn-206. Residues 454–474 (IFNPTAVVSFLAGLIGVTVAV) traverse the membrane as a helical segment. Residues 475–1077 (VYNKIAKSSP…HEVATHKFLQ (603 aa)) are Cytoplasmic-facing. A Protein kinase domain is found at 604–1076 (FEVKKVIGHG…AHEVATHKFL (473 aa)). ATP is bound by residues 610–618 (IGHGGFGVV) and Lys-633. The segment at 727–834 (MPPVVGNTTD…FVDGSDDVDN (108 aa)) is disordered. Over residues 732–746 (GNTTDAENSWSTSAK) the composition is skewed to polar residues. The segment covering 766-778 (GSDRTTAELKEES) has biased composition (basic and acidic residues). Positions 783 to 796 (ESDEESDTTEDSSS) are enriched in acidic residues. A compositionally biased stretch (low complexity) spans 797 to 808 (SDESPSSSSGSS). The active-site Proton acceptor is the Asp-933.

It belongs to the protein kinase superfamily. Ser/Thr protein kinase family. GCN2 subfamily. In terms of assembly, forms dimers with HSPA5/BIP in resting cells. Oligomerizes in ER-stressed cells. Autophosphorylated. Post-translationally, N-glycosylated. Expressed in intestinal cells.

The protein localises to the endoplasmic reticulum membrane. The catalysed reaction is L-seryl-[protein] + ATP = O-phospho-L-seryl-[protein] + ADP + H(+). The enzyme catalyses L-threonyl-[protein] + ATP = O-phospho-L-threonyl-[protein] + ADP + H(+). Its activity is regulated as follows. Perturbation in protein folding in the endoplasmic reticulum (ER) promotes reversible dissociation from HSPA5/BIP and oligomerization, resulting in transautophosphorylation and kinase activity induction. Phosphorylates the alpha subunit of eukaryotic translation-initiation factor 2 (eIF2alpha), leading to its inactivation and thus to a rapid reduction of translational initiation and repression of global protein synthesis. May phosphorylate eIF2alpha during hypoxia. Proposed to have a role in alleviating endoplasmic reticulum stress. This Caenorhabditis elegans protein is Eukaryotic translation initiation factor 2-alpha kinase pek-1 (pek-1).